Here is a 65-residue protein sequence, read N- to C-terminus: Large ribosomal subunit protein bL35 (65 aa).

Belongs to the bacterial ribosomal protein bL35 family.

The chain is Large ribosomal subunit protein bL35 from Karelsulcia muelleri (strain GWSS) (Sulcia muelleri).